The following is a 156-amino-acid chain: uncharacterized protein (156 aa).

2 helical membrane-spanning segments follow: residues 46–66 (GLVL…AGVV) and 114–134 (IIDI…IVAL).

It is found in the cell membrane. This is an uncharacterized protein from Haemophilus influenzae (strain ATCC 51907 / DSM 11121 / KW20 / Rd).